An 85-amino-acid polypeptide reads, in one-letter code: Protein RnfH (85 aa).

It belongs to the UPF0125 (RnfH) family.

The sequence is that of Protein RnfH from Cereibacter sphaeroides (strain ATCC 17023 / DSM 158 / JCM 6121 / CCUG 31486 / LMG 2827 / NBRC 12203 / NCIMB 8253 / ATH 2.4.1.) (Rhodobacter sphaeroides).